The following is a 403-amino-acid chain: Odorant receptor 43b (403 aa).

Topologically, residues 1–49 (MFGHFKLVYPAPISEPIQSRDSNAYMMETLRNSGLNLKNDFGIGRKIWR) are cytoplasmic. Residues 50-70 (VFSFTYNMVILPVSFPINYVI) form a helical membrane-spanning segment. Topologically, residues 71-83 (HLAEFPPELLLQS) are extracellular. The chain crosses the membrane as a helical span at residues 84-104 (LQLCLNTWCFALKFFTLIVYT). Residues 105–139 (HRLELANKHFDELDKYCVKPAEKRKVRDMVATITR) are Cytoplasmic-facing. The helical transmembrane segment at 140 to 160 (LYLTFVVVYVLYATSTLLDGL) threads the bilayer. Residues 161 to 193 (LHHRVPYNTYYPFINWRVDRTQMYIQSFLEYFT) are Extracellular-facing. The chain crosses the membrane as a helical span at residues 194-214 (VGYAIYVATATDSYPVIYVAA). Residues 215 to 271 (LRTHILLLKDRIIYLGDPSNEGSSDPSYMFKSLVDCIKAHRTMLNFCDAIQPIISGT) lie on the Cytoplasmic side of the membrane. Residues 272–292 (IFAQFIICGSILGIIMINMVL) traverse the membrane as a helical segment. Over 293–299 (FADQSTR) the chain is Extracellular. Residues 300 to 320 (FGIVIYVMAVLLQTFPLCFYC) form a helical membrane-spanning segment. The Cytoplasmic portion of the chain corresponds to 321–372 (NAIVDDCKELAHALFHSAWWVQDKRYQRTVIQFLQKLQQPMTFTAMNIFNIN). A helical membrane pass occupies residues 373-393 (LATNINVAKFAFTVYAIASGM). Topologically, residues 394–403 (NLDQKLSIKE) are extracellular.

This sequence belongs to the insect chemoreceptor superfamily. Heteromeric odorant receptor channel (TC 1.A.69) family. Or2a subfamily. In terms of assembly, interacts with Orco. Complexes exist early in the endomembrane system in olfactory sensory neurons (OSNs), coupling these complexes to the conserved ciliary trafficking pathway. Expressed in 16 olfactory receptor neurons in a broad area across the antenna, including both anterior and posterior faces and in the maxillary palp. This expression pattern matches the distribution of the small sensilla basiconica. Expression in the antenna is observed late in antennal development at 93 hours APF.

It localises to the cell membrane. Its function is as follows. Odorant receptor which mediates acceptance or avoidance behavior, depending on its substrates. The odorant receptor repertoire encodes a large collection of odor stimuli that vary widely in identity, intensity, and duration. May form a complex with Orco to form odorant-sensing units, providing sensitive and prolonged odorant signaling and calcium permeability. This chain is Odorant receptor 43b (Or43b), found in Drosophila melanogaster (Fruit fly).